Reading from the N-terminus, the 158-residue chain is Cyclic pyranopterin monophosphate synthase (158 aa).

Substrate contacts are provided by residues 76–78 (LCH) and 114–115 (ME). Residue aspartate 129 is part of the active site.

This sequence belongs to the MoaC family. Homohexamer; trimer of dimers.

The enzyme catalyses (8S)-3',8-cyclo-7,8-dihydroguanosine 5'-triphosphate = cyclic pyranopterin phosphate + diphosphate. It participates in cofactor biosynthesis; molybdopterin biosynthesis. In terms of biological role, catalyzes the conversion of (8S)-3',8-cyclo-7,8-dihydroguanosine 5'-triphosphate to cyclic pyranopterin monophosphate (cPMP). This chain is Cyclic pyranopterin monophosphate synthase, found in Shewanella frigidimarina (strain NCIMB 400).